The chain runs to 129 residues: Large ribosomal subunit protein uL22 (129 aa).

This sequence belongs to the universal ribosomal protein uL22 family. As to quaternary structure, part of the 50S ribosomal subunit.

This protein binds specifically to 23S rRNA; its binding is stimulated by other ribosomal proteins, e.g. L4, L17, and L20. It is important during the early stages of 50S assembly. It makes multiple contacts with different domains of the 23S rRNA in the assembled 50S subunit and ribosome. In terms of biological role, the globular domain of the protein is located near the polypeptide exit tunnel on the outside of the subunit, while an extended beta-hairpin is found that lines the wall of the exit tunnel in the center of the 70S ribosome. This Metamycoplasma hominis (strain ATCC 23114 / DSM 25592 / NBRC 14850 / NCTC 10111 / PG21) (Mycoplasma hominis) protein is Large ribosomal subunit protein uL22.